A 372-amino-acid polypeptide reads, in one-letter code: Proton-coupled zinc antiporter SLC30A2 (372 aa).

Residues Met1–Glu140 lie on the Cytoplasmic side of the membrane. Positions His51–His54 match the Mitochondrial localization signal motif. Zn(2+) contacts are provided by Cys53, His106, and Asp110. The chain crosses the membrane as a helical span at residues Ile141 to Leu161. At Ala162–Gly175 the chain is on the lumenal side. Residues Gly176 to Leu196 traverse the membrane as a helical segment. The Cytoplasmic portion of the chain corresponds to His197–Ala220. Residues Phe221–Leu241 traverse the membrane as a helical segment. Zn(2+) is bound by residues His223 and Asp227. The Lumenal segment spans residues Tyr242–Tyr249. A helical transmembrane segment spans residues Val250 to Leu270. Topologically, residues Arg271–His304 are cytoplasmic. The short motif at Leu294–Leu295 is the Lysosomal targeting motif element. Residue Ser296 is modified to Phosphoserine. Residues His304, His321, and Glu355 each coordinate Zn(2+). A helical transmembrane segment spans residues Ser305–Ala325. The Lumenal portion of the chain corresponds to Gln326–Asp372.

The protein belongs to the cation diffusion facilitator (CDF) transporter (TC 2.A.4) family. SLC30A subfamily. Homodimer. Interacts (via lysosomal targeting motif) with AP3D1; in AP-3-mediated transport to lysosomes. Interacts with TMEM163. Post-translationally, phosphorylated at Ser-296. Phosphorylation at Ser-296 prevents localization to lysosomes. Dephosphorylation of Ser-296 which triggers localization to lysosomes, accumulation of zinc into lysosomes and lysosomal-mediated cell death is induced by TNF-alpha.

The protein localises to the cytoplasmic vesicle. The protein resides in the secretory vesicle membrane. It is found in the zymogen granule membrane. Its subcellular location is the endosome membrane. It localises to the lysosome membrane. The protein localises to the mitochondrion inner membrane. The protein resides in the cell membrane. The enzyme catalyses Zn(2+)(in) + 2 H(+)(out) = Zn(2+)(out) + 2 H(+)(in). Electroneutral proton-coupled antiporter concentrating zinc ions into a variety of intracellular organelles including endosomes, zymogen granules and mitochondria. Thereby, plays a crucial role in cellular zinc homeostasis to confer upon cells protection against its potential cytotoxicity. Regulates the zinc concentration of milk, through the transport of zinc ions into secretory vesicles of mammary cells. By concentrating zinc ions into lysosomes participates to lysosomal-mediated cell death during early mammary gland involution. Its function is as follows. Electroneutral proton-coupled antiporter mediating the efflux of zinc ions through the plasma membrane. This Homo sapiens (Human) protein is Proton-coupled zinc antiporter SLC30A2.